The sequence spans 611 residues: Dihydroxy-acid dehydratase (611 aa).

D81 provides a ligand contact to Mg(2+). C122 lines the [2Fe-2S] cluster pocket. Mg(2+) contacts are provided by D123 and K124. The residue at position 124 (K124) is an N6-carboxylysine. C195 is a [2Fe-2S] cluster binding site. Position 491 (E491) interacts with Mg(2+). The Proton acceptor role is filled by S517.

Belongs to the IlvD/Edd family. As to quaternary structure, homodimer. It depends on [2Fe-2S] cluster as a cofactor. Mg(2+) serves as cofactor.

The enzyme catalyses (2R)-2,3-dihydroxy-3-methylbutanoate = 3-methyl-2-oxobutanoate + H2O. It catalyses the reaction (2R,3R)-2,3-dihydroxy-3-methylpentanoate = (S)-3-methyl-2-oxopentanoate + H2O. The protein operates within amino-acid biosynthesis; L-isoleucine biosynthesis; L-isoleucine from 2-oxobutanoate: step 3/4. Its pathway is amino-acid biosynthesis; L-valine biosynthesis; L-valine from pyruvate: step 3/4. Functions in the biosynthesis of branched-chain amino acids. Catalyzes the dehydration of (2R,3R)-2,3-dihydroxy-3-methylpentanoate (2,3-dihydroxy-3-methylvalerate) into 2-oxo-3-methylpentanoate (2-oxo-3-methylvalerate) and of (2R)-2,3-dihydroxy-3-methylbutanoate (2,3-dihydroxyisovalerate) into 2-oxo-3-methylbutanoate (2-oxoisovalerate), the penultimate precursor to L-isoleucine and L-valine, respectively. This chain is Dihydroxy-acid dehydratase, found in Brucella canis (strain ATCC 23365 / NCTC 10854 / RM-666).